The primary structure comprises 426 residues: MSQYQAVKGTKDVFPDEAVQWQLVEGVVRRLAGLYAFGEVRTPVFEYTELFQRGIGATTDIVGKEMFSFLPDPQGRSLTLRPEMTAGVMRAALQRNLLSQAPLHKLFYISDLFRKERPQAGRQRQFTQFGAELLGASSPAAVAEVLSFMMGVFDALGLKGLRLRINTLGDLEDRARYRDALRAYFLPFADELDESSKERLEKNPLRILDSKNPALKELIAAAPRLFDFVKAEGVAEFEEVLSLLRDRGVSYEVDHLLVRGLDYYCHTAFEVTSSELGAQDAIGGGGRYDGLARELGGGKDMPAVGFAVGMERLLIAMEKQGLLEGLKPVGPKVFVVVQQLELSGHAMQVAFQLRRAGISTELDLAGRSMKAQMREANRLGAAYALFIGQTEFESGQYGLKNLVSSEQSTLTLDSITETLREPLLCG.

The protein belongs to the class-II aminoacyl-tRNA synthetase family. As to quaternary structure, homodimer.

It localises to the cytoplasm. The enzyme catalyses tRNA(His) + L-histidine + ATP = L-histidyl-tRNA(His) + AMP + diphosphate + H(+). This is Histidine--tRNA ligase from Chlorobium phaeovibrioides (strain DSM 265 / 1930) (Prosthecochloris vibrioformis (strain DSM 265)).